Here is a 788-residue protein sequence, read N- to C-terminus: Cyclin-F (788 aa).

The Nuclear localization signal 1 motif lies at 20–28 (KRRIRRRPR). One can recognise an F-box domain in the interval 29 to 76 (NLTILNLPEDALFHILKWLSVGDILAVRAVHSHLKYLVDNHASVWACA). Residues 291-405 (HAVNKQRVFS…EVVSALDGKI (115 aa)) enclose the Cyclin N-terminal domain. Short sequence motifs (d box) lie at residues 310–313 (RYIL), 343–346 (RRRL), 349–352 (RYRL), and 351–354 (RLQL). Disordered regions lie at residues 566 to 585 (SARRTKRKRENSLQEDRGSF) and 700 to 788 (TSGY…FLKL). The Nuclear localization signal 2 motif lies at 568–574 (RRTKRKR). Residues 582–766 (RGSFVTTPTA…ESCAPQQQVK (185 aa)) form a PEST region. Composition is skewed to polar residues over residues 700-716 (TSGYSSVNSASPTDSGR) and 723-738 (RSTSELPTGSSLNTQP). A D box 5 motif is present at residues 767-770 (RKNL).

This sequence belongs to the cyclin family. Cyclin AB subfamily. In terms of assembly, component of the SCF(CCNF) complex consisting of CUL1, RBX1, SKP1 and CCNF. Interacts with SKP1. Interacts with CUL1. Interacts with CCNB1; interaction is required for nuclear localization of CCNB1. Interacts with CCP110; this interaction leads to CCP110 ubiquitination and degradation via the proteasome pathway. Interacts (via the Cyclin N-terminal domain) with MYBL2/BMYB. Interacts with FZR1/CDH1 (via N-terminus). Interacts with RRM2 (via Cy motif and when phosphorylated at 'Thr-33'); the interaction occurs exclusively in G2 and early M. Interacts with CDC6 (via Cy motif); the interaction takes place during G2 and M phase. Post-translationally, degraded when the spindle assembly checkpoint is activated during the G2-M transition. Degradation is not dependent on the proteasome or ubiquitin and depends on the C-terminal PEST sequence. Phosphorylated just before cells enter into mitosis. In terms of processing, ubiquitinated by the anaphase-promoting complex (APC/C); leading to its degradation by the proteasome.

Its subcellular location is the nucleus. It is found in the cytoplasm. It localises to the perinuclear region. The protein localises to the cytoskeleton. The protein resides in the microtubule organizing center. Its subcellular location is the centrosome. It is found in the centriole. Functionally, substrate recognition component of a SCF (SKP1-CUL1-F-box protein) E3 ubiquitin-protein ligase complex which mediates the ubiquitination and subsequent proteasomal degradation of target proteins. The SCF(CCNF) E3 ubiquitin-protein ligase complex is an integral component of the ubiquitin proteasome system (UPS) and links proteasome degradation to the cell cycle. Mediates the substrate recognition and the proteasomal degradation of various target proteins involved in the regulation of cell cycle progression and in the maintenance of genome stability. Mediates the ubiquitination and subsequent proteasomal degradation of CP110 during G2 phase, thereby acting as an inhibitor of centrosome reduplication. In G2, mediates the ubiquitination and proteasomal degradation of CDC6, thereby suppressing DNA re-replication and preventing genome instability. Involved in the ubiquitination and degradation of the substrate adapter CDH1 of the anaphase-promoting complex (APC/C), thereby acting as an antagonist of APC/C in regulating G1 progression and S phase entry. May play a role in the G2 cell cycle checkpoint control after DNA damage, possibly by promoting the ubiquitination of MYBL2/BMYB. The polypeptide is Cyclin-F (CCNF) (Bos taurus (Bovine)).